Reading from the N-terminus, the 355-residue chain is UDP-N-acetylglucosamine--N-acetylmuramyl-(pentapeptide) pyrophosphoryl-undecaprenol N-acetylglucosamine transferase (355 aa).

UDP-N-acetyl-alpha-D-glucosamine is bound by residues 13 to 15, N125, R162, S190, I244, and Q289; that span reads TGG.

It belongs to the glycosyltransferase 28 family. MurG subfamily.

It localises to the cell inner membrane. The enzyme catalyses di-trans,octa-cis-undecaprenyl diphospho-N-acetyl-alpha-D-muramoyl-L-alanyl-D-glutamyl-meso-2,6-diaminopimeloyl-D-alanyl-D-alanine + UDP-N-acetyl-alpha-D-glucosamine = di-trans,octa-cis-undecaprenyl diphospho-[N-acetyl-alpha-D-glucosaminyl-(1-&gt;4)]-N-acetyl-alpha-D-muramoyl-L-alanyl-D-glutamyl-meso-2,6-diaminopimeloyl-D-alanyl-D-alanine + UDP + H(+). It participates in cell wall biogenesis; peptidoglycan biosynthesis. Functionally, cell wall formation. Catalyzes the transfer of a GlcNAc subunit on undecaprenyl-pyrophosphoryl-MurNAc-pentapeptide (lipid intermediate I) to form undecaprenyl-pyrophosphoryl-MurNAc-(pentapeptide)GlcNAc (lipid intermediate II). In Neisseria meningitidis serogroup C / serotype 2a (strain ATCC 700532 / DSM 15464 / FAM18), this protein is UDP-N-acetylglucosamine--N-acetylmuramyl-(pentapeptide) pyrophosphoryl-undecaprenol N-acetylglucosamine transferase.